A 187-amino-acid chain; its full sequence is Large ribosomal subunit protein uL24c (187 aa).

A chloroplast-targeting transit peptide spans 1–41 (MAALQSSFAGLSTSFFGQRFSPPLSLPPLVKSTEGPCLIQA).

This sequence belongs to the universal ribosomal protein uL24 family. Part of the 50S ribosomal subunit.

It localises to the plastid. The protein localises to the chloroplast. Its function is as follows. One of two assembly initiator proteins, it binds directly to the 5'-end of the 23S rRNA, where it nucleates assembly of the 50S subunit. The protein is Large ribosomal subunit protein uL24c (RPL24) of Nicotiana tabacum (Common tobacco).